The primary structure comprises 330 residues: Protein pelota homolog (330 aa).

The protein belongs to the eukaryotic release factor 1 family. Pelota subfamily. In terms of assembly, monomer. The cofactor is a divalent metal cation.

The protein localises to the cytoplasm. In terms of biological role, may function in recognizing stalled ribosomes, interact with stem-loop structures in stalled mRNA molecules, and effect endonucleolytic cleavage of the mRNA. May play a role in the release non-functional ribosomes and degradation of damaged mRNAs. Has endoribonuclease activity. The sequence is that of Protein pelota homolog from Pyrobaculum neutrophilum (strain DSM 2338 / JCM 9278 / NBRC 100436 / V24Sta) (Thermoproteus neutrophilus).